Reading from the N-terminus, the 190-residue chain is RNA-binding protein OPG065 (190 aa).

The 66-residue stretch at 5 to 70 (YIDERSDAEI…DIPPRWFMTT (66 aa)) folds into the Z-binding domain. In terms of domain architecture, DRBM spans 117–184 (NPVTIINEYC…AKLAVDKLLG (68 aa)).

Belongs to the orthopoxvirus OPG065 family. Interacts with host G1P2/ISG15. Interacts with host EIF2AK2/PKR. Interacts with host ZBP1.

Functionally, RNA-binding protein that plays a role in the inhibition of multiple cellular antiviral responses activated by double-stranded RNA (dsRNA), such as inhibition of PKR activation, necroptosis, and IFN-mediated antiviral activities. Recognizes and binds Z-RNA structures via its Z-binding domain and dsRNA via its DRBM domain: RNA-binding activity is required to escape host ZBP1-dependent necroptosis. Mechanistically, the Z-binding domain binds Z-RNAs that are produced during vaccinia virus infection, thereby competing with Z-RNA detection by host ZBP1, suppressing ZBP1-dependent necroptosis. Acts as a key inhibitor of the interferon response by blocking the phosphorylation and subsequent activation of IRF3 and IRF7 kinases that are required for interferon-alpha gene expression. Inhibits NF-kappa-B activation and the ubiquitin-like protein ISG15, which is an early antiviral protein. The binding with host ISG15 subsequently blocks host ISGylation. The chain is RNA-binding protein OPG065 (OPG065) from Homo sapiens (Human).